The primary structure comprises 404 residues: CCA-adding enzyme (404 aa).

Glycine 27 and arginine 30 together coordinate ATP. Residues glycine 27 and arginine 30 each coordinate CTP. 2 residues coordinate Mg(2+): aspartate 40 and aspartate 42. ATP-binding residues include arginine 111, aspartate 154, arginine 157, arginine 160, and arginine 163. The CTP site is built by arginine 111, aspartate 154, arginine 157, arginine 160, and arginine 163.

Belongs to the tRNA nucleotidyltransferase/poly(A) polymerase family. Bacterial CCA-adding enzyme type 3 subfamily. In terms of assembly, homodimer. Mg(2+) is required as a cofactor.

It carries out the reaction a tRNA precursor + 2 CTP + ATP = a tRNA with a 3' CCA end + 3 diphosphate. It catalyses the reaction a tRNA with a 3' CCA end + 2 CTP + ATP = a tRNA with a 3' CCACCA end + 3 diphosphate. Its function is as follows. Catalyzes the addition and repair of the essential 3'-terminal CCA sequence in tRNAs without using a nucleic acid template. Adds these three nucleotides in the order of C, C, and A to the tRNA nucleotide-73, using CTP and ATP as substrates and producing inorganic pyrophosphate. tRNA 3'-terminal CCA addition is required both for tRNA processing and repair. Also involved in tRNA surveillance by mediating tandem CCA addition to generate a CCACCA at the 3' terminus of unstable tRNAs. While stable tRNAs receive only 3'-terminal CCA, unstable tRNAs are marked with CCACCA and rapidly degraded. In Geobacillus thermodenitrificans (strain NG80-2), this protein is CCA-adding enzyme.